We begin with the raw amino-acid sequence, 432 residues long: Enolase (432 aa).

Q167 provides a ligand contact to (2R)-2-phosphoglycerate. Residue E209 is the Proton donor of the active site. Mg(2+) contacts are provided by D246, E290, and D317. (2R)-2-phosphoglycerate is bound by residues K342, R371, S372, and K393. Catalysis depends on K342, which acts as the Proton acceptor.

This sequence belongs to the enolase family. In terms of assembly, component of the RNA degradosome, a multiprotein complex involved in RNA processing and mRNA degradation. Mg(2+) is required as a cofactor.

It is found in the cytoplasm. The protein localises to the secreted. The protein resides in the cell surface. It catalyses the reaction (2R)-2-phosphoglycerate = phosphoenolpyruvate + H2O. It functions in the pathway carbohydrate degradation; glycolysis; pyruvate from D-glyceraldehyde 3-phosphate: step 4/5. Catalyzes the reversible conversion of 2-phosphoglycerate (2-PG) into phosphoenolpyruvate (PEP). It is essential for the degradation of carbohydrates via glycolysis. This chain is Enolase, found in Salmonella dublin (strain CT_02021853).